The chain runs to 991 residues: Replication protein 1a (991 aa).

Residues 52–409 (VLDVKDSEVI…TIVINGMSMQ (358 aa)) are methyltransferase. Positions 72–290 (HLAQQELAPH…HDWDNIKSFM (219 aa)) constitute an Alphavirus-like MT domain. The region spanning 686–837 (CVISNSHDLF…KLIPDETSDA (152 aa)) is the (+)RNA virus helicase ATP-binding domain. The interval 711–973 (VDGVAGCGKT…VTRHKVTFRY (263 aa)) is ATP-dependent helicase. 713–720 (GVAGCGKT) lines the ATP pocket. Residues 838–991 (DTTFRSPQDV…DLIANCIPLV (154 aa)) form the (+)RNA virus helicase C-terminal domain.

This sequence belongs to the bromoviridae replication protein 1a family. As to quaternary structure, interacts with RNA-directed RNA polymerase 2a.

It is found in the host endoplasmic reticulum membrane. Functionally, involved in the virus replication. Contains a helicase domain and a methyltransferase domain. The methyltransferase domain is probably involved in viral RNA capping. Involved in the formation of ER membrane spherular invaginations in which RNA replication complexes form. In Cucumber mosaic virus (strain Q) (CMV), this protein is Replication protein 1a.